The following is a 547-amino-acid chain: Phosphomethylpyrimidine synthase (547 aa).

Residues Asn150, Met179, Tyr208, His244, 264–266 (SRG), 305–308 (DGLR), and Glu344 contribute to the substrate site. His348 is a binding site for Zn(2+). Tyr371 contacts substrate. His412 contacts Zn(2+). [4Fe-4S] cluster-binding residues include Cys492, Cys495, and Cys500.

Belongs to the ThiC family. [4Fe-4S] cluster is required as a cofactor.

The enzyme catalyses 5-amino-1-(5-phospho-beta-D-ribosyl)imidazole + S-adenosyl-L-methionine = 4-amino-2-methyl-5-(phosphooxymethyl)pyrimidine + CO + 5'-deoxyadenosine + formate + L-methionine + 3 H(+). It functions in the pathway cofactor biosynthesis; thiamine diphosphate biosynthesis. In terms of biological role, catalyzes the synthesis of the hydroxymethylpyrimidine phosphate (HMP-P) moiety of thiamine from aminoimidazole ribotide (AIR) in a radical S-adenosyl-L-methionine (SAM)-dependent reaction. This is Phosphomethylpyrimidine synthase from Nocardia farcinica (strain IFM 10152).